The following is a 741-amino-acid chain: Pentatricopeptide repeat-containing protein At1g05670, mitochondrial (741 aa).

The transit peptide at 1–21 directs the protein to the mitochondrion; the sequence is MKKPFTGLLMKRGTLSSFRNF. 15 PPR repeats span residues 174–208, 209–244, 245–279, 280–314, 315–349, 350–384, 385–419, 420–454, 455–489, 490–524, 525–559, 560–594, 595–629, 630–664, and 665–699; these read DPRV…GLVL, SVDS…GVCW, NVAS…GYTP, DVIS…GLKP, NSYI…GILP, DTVV…DITP, DVLT…GLEP, DSVT…GCSP, NVVT…GLQP, NIFT…GLNA, DTVT…GLQP, TIVT…GIAP, NATT…GVGP, DGKT…GFSV, and SVST…GLAA.

Belongs to the PPR family. P subfamily.

The protein localises to the mitochondrion. The chain is Pentatricopeptide repeat-containing protein At1g05670, mitochondrial from Arabidopsis thaliana (Mouse-ear cress).